A 173-amino-acid polypeptide reads, in one-letter code: bZIP transcription factor 44 (173 aa).

Residues 1–65 form a disordered region; the sequence is MNNKTEMGSS…SRMRKQKHLD (65 aa). Residues 8-22 show a composition bias toward low complexity; that stretch reads GSSTSGNCSSVSTTG. Basic and acidic residues predominate over residues 30 to 41; it reads SDLRQRDLIDER. The bZIP domain maps to 39-102; it reads DERKRKRKQS…VTIEAENDIL (64 aa). The tract at residues 41 to 62 is basic motif; the sequence is RKRKRKQSNRESARRSRMRKQK. Positions 67–81 are leucine-zipper; it reads LTAQVTHLRKENAQI.

In terms of assembly, forms heterodimers with BZIP1, BZIP9, BZIP10, BZIP25 and BZIP63. Expressed in the micropylar endosperm and radicle tip in early germinating seeds.

It localises to the nucleus. Functionally, transcription factor that binds to the DNA G-box motif 5'-CACGTG-3' of MAN7 promoter. Involved in the positive regulation of seed germination through MAN7 gene activation. MAN7 is required for both, loosening of the micropylar endosperm, and rupture of the seed coat in germinating seeds. This chain is bZIP transcription factor 44, found in Arabidopsis thaliana (Mouse-ear cress).